Reading from the N-terminus, the 343-residue chain is Heat-inducible transcription repressor HrcA (343 aa).

It belongs to the HrcA family.

Its function is as follows. Negative regulator of class I heat shock genes (grpE-dnaK-dnaJ and groELS operons). Prevents heat-shock induction of these operons. This chain is Heat-inducible transcription repressor HrcA, found in Bacillus velezensis (strain DSM 23117 / BGSC 10A6 / LMG 26770 / FZB42) (Bacillus amyloliquefaciens subsp. plantarum).